Consider the following 2158-residue polypeptide: RNA1 polyprotein (2158 aa).

The propeptide at 1 to 105 (MSFSKMFPGF…VASMYKSICD (105 aa)) is removed in mature form. One can recognise an SF3 helicase domain in the interval 367-534 (DKIYGENCQH…GEFNTDAPTS (168 aa)). Residue 393-400 (GASGCGKS) participates in ATP binding. Residues 801-821 (GLILIALNGAFGAVTAFCACW) form a helical membrane-spanning segment. S844 carries the post-translational modification O-(5'-phospho-RNA)-serine. One can recognise a Peptidase C3 domain in the interval 870–1083 (ASDDGFINEG…FVASNATAIF (214 aa)). Residues H910, D946, and C1041 each act as for picornain 3C-like protease activity in the active site. Residues 1376–1511 (DTGFSADYSS…AVPMELHWYT (136 aa)) enclose the RdRp catalytic domain.

It localises to the host membrane. The catalysed reaction is RNA(n) + a ribonucleoside 5'-triphosphate = RNA(n+1) + diphosphate. Functionally, picornain 3C-like protease is a thiol protease that probably cleaves the polyprotein. This is RNA1 polyprotein from Capsicum annuum (Capsicum pepper).